The primary structure comprises 387 residues: Na(+)/H(+) antiporter NhaA (387 aa).

12 helical membrane-spanning segments follow: residues 16-36 (AGGV…NSSI), 53-73 (IEHY…GLEL), 89-109 (LLPI…HMFF), 118-138 (GSGI…SLLG), 147-167 (VFLT…IAIF), 171-191 (GIDV…FILN), 197-217 (ILWP…HSGV), 220-240 (TITG…PDSI), 251-271 (PVAF…IIDS), 283-303 (IGIF…FCAI), 321-341 (VIGV…ITLL), and 354-374 (IAIM…LKMT).

The protein belongs to the NhaA Na(+)/H(+) (TC 2.A.33) antiporter family.

The protein localises to the cell inner membrane. It carries out the reaction Na(+)(in) + 2 H(+)(out) = Na(+)(out) + 2 H(+)(in). In terms of biological role, na(+)/H(+) antiporter that extrudes sodium in exchange for external protons. In Cytophaga hutchinsonii (strain ATCC 33406 / DSM 1761 / CIP 103989 / NBRC 15051 / NCIMB 9469 / D465), this protein is Na(+)/H(+) antiporter NhaA.